Here is a 96-residue protein sequence, read N- to C-terminus: Putative septation protein SpoVG (96 aa).

The protein belongs to the SpoVG family.

Its function is as follows. Could be involved in septation. The chain is Putative septation protein SpoVG from Geobacillus sp. (strain WCH70).